The primary structure comprises 432 residues: Protein RETICULATA, chloroplastic (432 aa).

Residues M1–R47 constitute a chloroplast transit peptide. Positions G109–Y140 are disordered. The segment covering V111–E132 has biased composition (gly residues). The next 2 helical transmembrane spans lie at L249 to A269 and I322 to I342.

Belongs to the RETICULATA family. As to expression, highly expressed in the vasculature of developing leaf primordia, margins of fully expanded leaves, hydathodes of rosette of cauline leaves, basal region of the lamina, stipules, root tips, stamens and in the abscission zone of the funiculus.

The protein localises to the plastid. The protein resides in the chloroplast membrane. Functionally, may play a role in leaf development. Required for leaf mesophyll cell division in the early stages of leaf organogenesis. Acts in a developmental pathway that involves PPT1/CUE1 but does not include ASE2/DOV1. This Arabidopsis thaliana (Mouse-ear cress) protein is Protein RETICULATA, chloroplastic.